A 184-amino-acid polypeptide reads, in one-letter code: Oligoribonuclease (184 aa).

The region spanning leucine 10–leucine 172 is the Exonuclease domain. Residue tyrosine 129 is part of the active site.

It belongs to the oligoribonuclease family.

The protein localises to the cytoplasm. In terms of biological role, 3'-to-5' exoribonuclease specific for small oligoribonucleotides. This Tropheryma whipplei (strain Twist) (Whipple's bacillus) protein is Oligoribonuclease.